Here is a 512-residue protein sequence, read N- to C-terminus: MTIKRALISVSDKTNLVPFVKELTELGVEVISTGGTKKLLQENGVDVIGISEVTGFPEIMDGRLKTLHPNIHGGLLAVRGNEEHMAQINEHGIQPIDLVVVNLYPFKETISKEDVTYEEAIENIDIGGPGMLRAASKNHQDVTVIVDPADYSPVLNQIKEEGSVSLQKKRELAAKVFRHTAAYDALIADYLTNVVGEKEPEQFTVTFEKKQSLRYGENPHQEATFYQTALPVKGSIAQAEQLHGKELSYNNIKDADAAVQIVREFTEPAAVAVKHMNPCGVGTGKTIAEAFDRAFEADKTSIFGGIIALNREVDKATAEALHNIFLEIIIAPSFSQEALDVLTAKKNLRLLTLDVSAAVQKEKQLTSVQGGLLIQDLDMHGFDDAEISIPTKREPNEQEWEDLKLAWKVVKHVKSNAIVLAKDNMTVGVGAGQMNRVGSAKIAIEQAGEKAKGSALGSDAYFPMPDTVEEAAKAGVTAIIQPGGSIRDEDSIKKADEYGIAMVFTGIRHFKH.

Residues 1–146 form the MGS-like domain; it reads MTIKRALISV…KNHQDVTVIV (146 aa).

Belongs to the PurH family.

The enzyme catalyses (6R)-10-formyltetrahydrofolate + 5-amino-1-(5-phospho-beta-D-ribosyl)imidazole-4-carboxamide = 5-formamido-1-(5-phospho-D-ribosyl)imidazole-4-carboxamide + (6S)-5,6,7,8-tetrahydrofolate. It catalyses the reaction IMP + H2O = 5-formamido-1-(5-phospho-D-ribosyl)imidazole-4-carboxamide. It functions in the pathway purine metabolism; IMP biosynthesis via de novo pathway; 5-formamido-1-(5-phospho-D-ribosyl)imidazole-4-carboxamide from 5-amino-1-(5-phospho-D-ribosyl)imidazole-4-carboxamide (10-formyl THF route): step 1/1. Its pathway is purine metabolism; IMP biosynthesis via de novo pathway; IMP from 5-formamido-1-(5-phospho-D-ribosyl)imidazole-4-carboxamide: step 1/1. The sequence is that of Bifunctional purine biosynthesis protein PurH from Bacillus subtilis (strain 168).